The chain runs to 313 residues: 2,3-dihydroxyphenylpropionate/2,3-dihydroxicinnamic acid 1,2-dioxygenase (313 aa).

The Proton donor role is filled by histidine 115. The active-site Proton acceptor is histidine 179.

It belongs to the LigB/MhpB extradiol dioxygenase family. As to quaternary structure, homotetramer. The cofactor is Fe(2+).

It catalyses the reaction 3-(2,3-dihydroxyphenyl)propanoate + O2 = (2Z,4E)-2-hydroxy-6-oxonona-2,4-dienedioate + H(+). The catalysed reaction is (2E)-3-(2,3-dihydroxyphenyl)prop-2-enoate + O2 = (2Z,4E,7E)-2-hydroxy-6-oxonona-2,4,7-trienedioate + H(+). The protein operates within aromatic compound metabolism; 3-phenylpropanoate degradation. Catalyzes the non-heme iron(II)-dependent oxidative cleavage of 2,3-dihydroxyphenylpropionic acid and 2,3-dihydroxicinnamic acid into 2-hydroxy-6-ketononadienedioate and 2-hydroxy-6-ketononatrienedioate, respectively. In Mycobacterium ulcerans (strain Agy99), this protein is 2,3-dihydroxyphenylpropionate/2,3-dihydroxicinnamic acid 1,2-dioxygenase.